Reading from the N-terminus, the 240-residue chain is Ubiquinone biosynthesis O-methyltransferase (240 aa).

S-adenosyl-L-methionine is bound by residues Arg44, Gly64, Asp85, and Met129.

This sequence belongs to the methyltransferase superfamily. UbiG/COQ3 family.

It catalyses the reaction a 3-demethylubiquinol + S-adenosyl-L-methionine = a ubiquinol + S-adenosyl-L-homocysteine + H(+). The catalysed reaction is a 3-(all-trans-polyprenyl)benzene-1,2-diol + S-adenosyl-L-methionine = a 2-methoxy-6-(all-trans-polyprenyl)phenol + S-adenosyl-L-homocysteine + H(+). It participates in cofactor biosynthesis; ubiquinone biosynthesis. O-methyltransferase that catalyzes the 2 O-methylation steps in the ubiquinone biosynthetic pathway. The polypeptide is Ubiquinone biosynthesis O-methyltransferase (Photorhabdus laumondii subsp. laumondii (strain DSM 15139 / CIP 105565 / TT01) (Photorhabdus luminescens subsp. laumondii)).